Consider the following 361-residue polypeptide: Putative F-box protein At3g25460 (361 aa).

An F-box domain is found at Met1–Lys45.

In Arabidopsis thaliana (Mouse-ear cress), this protein is Putative F-box protein At3g25460.